Consider the following 132-residue polypeptide: Glycine cleavage system H protein (132 aa).

The region spanning 24–106 (IATIGLSAHA…YEEGWFIKVR (83 aa)) is the Lipoyl-binding domain. Lysine 65 carries the N6-lipoyllysine modification.

It belongs to the GcvH family. The glycine cleavage system is composed of four proteins: P, T, L and H. (R)-lipoate is required as a cofactor.

The glycine cleavage system catalyzes the degradation of glycine. The H protein shuttles the methylamine group of glycine from the P protein to the T protein. This Picosynechococcus sp. (strain ATCC 27264 / PCC 7002 / PR-6) (Agmenellum quadruplicatum) protein is Glycine cleavage system H protein.